The sequence spans 92 residues: Small ribosomal subunit protein uS19 (92 aa).

This sequence belongs to the universal ribosomal protein uS19 family.

Functionally, protein S19 forms a complex with S13 that binds strongly to the 16S ribosomal RNA. The protein is Small ribosomal subunit protein uS19 (rpsS) of Rickettsia prowazekii (strain Madrid E).